The chain runs to 114 residues: Ig heavy chain V-A2 region BS-1 (114 aa).

Residue Q1 is modified to Pyrrolidone carboxylic acid. The Ig-like domain maps to 1 to 107 (QSVKESEGGL…YLGLMDVWGP (107 aa)).

The sequence is that of Ig heavy chain V-A2 region BS-1 from Oryctolagus cuniculus (Rabbit).